The primary structure comprises 337 residues: tRNA N6-adenosine threonylcarbamoyltransferase (337 aa).

Fe cation is bound by residues histidine 111 and histidine 115. Substrate is bound by residues leucine 134–glycine 138, aspartate 167, glycine 180, and asparagine 272. Fe cation is bound at residue aspartate 300.

Belongs to the KAE1 / TsaD family. The cofactor is Fe(2+).

The protein localises to the cytoplasm. The catalysed reaction is L-threonylcarbamoyladenylate + adenosine(37) in tRNA = N(6)-L-threonylcarbamoyladenosine(37) in tRNA + AMP + H(+). Required for the formation of a threonylcarbamoyl group on adenosine at position 37 (t(6)A37) in tRNAs that read codons beginning with adenine. Is involved in the transfer of the threonylcarbamoyl moiety of threonylcarbamoyl-AMP (TC-AMP) to the N6 group of A37, together with TsaE and TsaB. TsaD likely plays a direct catalytic role in this reaction. The chain is tRNA N6-adenosine threonylcarbamoyltransferase from Citrobacter koseri (strain ATCC BAA-895 / CDC 4225-83 / SGSC4696).